Here is a 337-residue protein sequence, read N- to C-terminus: Cytoskeleton protein RodZ (337 aa).

Residues 1–111 lie on the Cytoplasmic side of the membrane; the sequence is MNTEATHDQN…LGKRRKKRDG (111 aa). Residues 19–71 enclose the HTH cro/C1-type domain; it reads LRNAREQLGLSQQAVAERLCLKVSTVRDIEEDKAPADLASTFLRGYIRSYARL. Residues 30–49 constitute a DNA-binding region (H-T-H motif); sequence QQAVAERLCLKVSTVRDIEE. A helical; Signal-anchor for type II membrane protein transmembrane segment spans residues 112 to 132; sequence WLMTFTWLVLFVVIGLSGAWW. At 133 to 337 the chain is on the periplasmic side; that stretch reads WQDRKAQQEE…TLNAEQSPAQ (205 aa). A compositionally biased stretch (polar residues) spans 144–167; sequence TTMADQSSAELSSNSEQGQSVPLN. The disordered stretch occupies residues 144 to 235; sequence TTMADQSSAE…PTAATTPDGA (92 aa). Positions 168 to 207 are enriched in low complexity; that stretch reads TSTTTDPATTSTPPASVDTTATNTQTPAVTAPAPAVDPQQ. The segment covering 208–218 has biased composition (polar residues); the sequence is NAVVSPSQANV. Residues 219 to 235 are compositionally biased toward low complexity; sequence DTAATPAPTAATTPDGA.

Belongs to the RodZ family.

It is found in the cell inner membrane. In terms of biological role, cytoskeletal protein that is involved in cell-shape control through regulation of the length of the long axis. The protein is Cytoskeleton protein RodZ of Escherichia coli (strain K12 / MC4100 / BW2952).